Reading from the N-terminus, the 320-residue chain is Bifunctional phosphoglucose/phosphomannose isomerase (320 aa).

Positions 20-153 constitute an SIS domain; that stretch reads IAKDLTPYKG…NLLGVDKDEL (134 aa). D-fructose 6-phosphate contacts are provided by Gly37, Ser38, Ser80, Ser82, Thr85, and Arg132. The Proton acceptor role is filled by Glu204. D-fructose 6-phosphate contacts are provided by His220 and Lys313. Residue His220 is the Proton donor of the active site. Residue Lys313 is the Proton acceptor of the active site.

Belongs to the PGI/PMI family. Homodimer.

It carries out the reaction alpha-D-glucose 6-phosphate = beta-D-fructose 6-phosphate. The catalysed reaction is D-mannose 6-phosphate = D-fructose 6-phosphate. Dual specificity isomerase that catalyzes the isomerization of both glucose-6-phosphate and mannose-6-phosphate to fructose-6-phosphate. This is Bifunctional phosphoglucose/phosphomannose isomerase from Aquifex aeolicus (strain VF5).